The sequence spans 176 residues: NAD(P)H-quinone oxidoreductase subunit 6, chloroplastic (176 aa).

5 helical membrane passes run phenylalanine 10 to proline 30, proline 32 to leucine 52, alanine 61 to methionine 81, leucine 92 to methionine 112, and phenylalanine 152 to serine 172.

Belongs to the complex I subunit 6 family. As to quaternary structure, NDH is composed of at least 16 different subunits, 5 of which are encoded in the nucleus.

The protein resides in the plastid. The protein localises to the chloroplast thylakoid membrane. The enzyme catalyses a plastoquinone + NADH + (n+1) H(+)(in) = a plastoquinol + NAD(+) + n H(+)(out). It catalyses the reaction a plastoquinone + NADPH + (n+1) H(+)(in) = a plastoquinol + NADP(+) + n H(+)(out). Functionally, NDH shuttles electrons from NAD(P)H:plastoquinone, via FMN and iron-sulfur (Fe-S) centers, to quinones in the photosynthetic chain and possibly in a chloroplast respiratory chain. The immediate electron acceptor for the enzyme in this species is believed to be plastoquinone. Couples the redox reaction to proton translocation, and thus conserves the redox energy in a proton gradient. This is NAD(P)H-quinone oxidoreductase subunit 6, chloroplastic (ndhG) from Nasturtium officinale (Watercress).